The following is a 156-amino-acid chain: ATP synthase subunit b (156 aa).

The helical transmembrane segment at 7–29 threads the bilayer; it reads LIGQSITFIFFVWFSMKFVWPPI.

This sequence belongs to the ATPase B chain family. In terms of assembly, F-type ATPases have 2 components, F(1) - the catalytic core - and F(0) - the membrane proton channel. F(1) has five subunits: alpha(3), beta(3), gamma(1), delta(1), epsilon(1). F(0) has three main subunits: a(1), b(2) and c(10-14). The alpha and beta chains form an alternating ring which encloses part of the gamma chain. F(1) is attached to F(0) by a central stalk formed by the gamma and epsilon chains, while a peripheral stalk is formed by the delta and b chains.

The protein localises to the cell inner membrane. F(1)F(0) ATP synthase produces ATP from ADP in the presence of a proton or sodium gradient. F-type ATPases consist of two structural domains, F(1) containing the extramembraneous catalytic core and F(0) containing the membrane proton channel, linked together by a central stalk and a peripheral stalk. During catalysis, ATP synthesis in the catalytic domain of F(1) is coupled via a rotary mechanism of the central stalk subunits to proton translocation. In terms of biological role, component of the F(0) channel, it forms part of the peripheral stalk, linking F(1) to F(0). The polypeptide is ATP synthase subunit b (Thiobacillus denitrificans (strain ATCC 25259 / T1)).